The following is a 184-amino-acid chain: MKKYIKMYLVLLIAIILFITILVIFLISGLFYPEQNPLLPISPPKKKCKTDTDCKDKGHHCVGGFCTNMSCVEAAKYDIKDIKIDPNIRSCNYTPKFYKFSNTTADLQSPFGKSRIDYGWIYSPHSNEDSCQSFCANYPEGCIAWEYDQFSGTTTGECFLYTNPHPVLKYKNGATVMAIPRKVL.

Residues 1–6 (MKKYIK) are Intravirion-facing. The helical transmembrane segment at 7–27 (MYLVLLIAIILFITILVIFLI) threads the bilayer. The Virion surface segment spans residues 28-184 (SGLFYPEQNP…TVMAIPRKVL (157 aa)).

This sequence belongs to the asfivirus envelope protein p22 family.

It is found in the virion membrane. The protein localises to the host cell membrane. The chain is Envelope protein 169 from Ornithodoros (relapsing fever ticks).